Here is a 449-residue protein sequence, read N- to C-terminus: Glucose-6-phosphate isomerase (449 aa).

Glutamate 291 serves as the catalytic Proton donor. Residues histidine 312 and lysine 426 contribute to the active site.

The protein belongs to the GPI family.

It is found in the cytoplasm. The catalysed reaction is alpha-D-glucose 6-phosphate = beta-D-fructose 6-phosphate. The protein operates within carbohydrate biosynthesis; gluconeogenesis. It functions in the pathway carbohydrate degradation; glycolysis; D-glyceraldehyde 3-phosphate and glycerone phosphate from D-glucose: step 2/4. In terms of biological role, catalyzes the reversible isomerization of glucose-6-phosphate to fructose-6-phosphate. This chain is Glucose-6-phosphate isomerase, found in Streptococcus pneumoniae (strain ATCC BAA-255 / R6).